The primary structure comprises 492 residues: Glutamyl-tRNA(Gln) amidotransferase subunit A (492 aa).

Catalysis depends on charge relay system residues Lys78 and Ser158. Ser182 acts as the Acyl-ester intermediate in catalysis.

This sequence belongs to the amidase family. GatA subfamily. In terms of assembly, heterotrimer of A, B and C subunits.

The catalysed reaction is L-glutamyl-tRNA(Gln) + L-glutamine + ATP + H2O = L-glutaminyl-tRNA(Gln) + L-glutamate + ADP + phosphate + H(+). Allows the formation of correctly charged Gln-tRNA(Gln) through the transamidation of misacylated Glu-tRNA(Gln) in organisms which lack glutaminyl-tRNA synthetase. The reaction takes place in the presence of glutamine and ATP through an activated gamma-phospho-Glu-tRNA(Gln). The chain is Glutamyl-tRNA(Gln) amidotransferase subunit A from Rickettsia akari (strain Hartford).